Consider the following 161-residue polypeptide: MSLLEREESWRRVVDYSHNLWCTCGNWQSHVEIQDEEPNCEQPEPAHWLEYVAVQWQARVRDSHDRWCLCNAWRDHALRGRWGTAYSSGSSASSSGFVAESKFTWWKRLRHSTRRWLFRRRRARYTPSNCGESSTSSGQSSGDESNCSLRTHGVYTRGEQH.

Residues 126 to 161 form a disordered region; the sequence is TPSNCGESSTSSGQSSGDESNCSLRTHGVYTRGEQH. Residues 128 to 148 show a composition bias toward low complexity; the sequence is SNCGESSTSSGQSSGDESNCS.

This sequence belongs to the herpesviridae US1 family.

This is an uncharacterized protein from Human cytomegalovirus (strain AD169) (HHV-5).